The primary structure comprises 194 residues: ATP-dependent Clp protease proteolytic subunit (194 aa).

The Nucleophile role is filled by S97. Residue H122 is part of the active site.

Belongs to the peptidase S14 family. As to quaternary structure, fourteen ClpP subunits assemble into 2 heptameric rings which stack back to back to give a disk-like structure with a central cavity, resembling the structure of eukaryotic proteasomes.

Its subcellular location is the cytoplasm. The enzyme catalyses Hydrolysis of proteins to small peptides in the presence of ATP and magnesium. alpha-casein is the usual test substrate. In the absence of ATP, only oligopeptides shorter than five residues are hydrolyzed (such as succinyl-Leu-Tyr-|-NHMec, and Leu-Tyr-Leu-|-Tyr-Trp, in which cleavage of the -Tyr-|-Leu- and -Tyr-|-Trp bonds also occurs).. Functionally, cleaves peptides in various proteins in a process that requires ATP hydrolysis. Has a chymotrypsin-like activity. Plays a major role in the degradation of misfolded proteins. This Thermus thermophilus (strain ATCC BAA-163 / DSM 7039 / HB27) protein is ATP-dependent Clp protease proteolytic subunit.